The chain runs to 307 residues: MQAALTAFFMLLFSLLSLLGIAANGFIVLVLGREWLRYGRLLPLDMILISLGASRFCLQLVGTVHNFYYSAQKVEYSGGLGRQFFHLHWHFLNSATFWFCSWLSVLFCVKIANITHPTFLWLKWRFPAWVPWLLLGSVLISFIITLLFFWVNYPAYQEFLIRKFSVNMTYKWNTRIETYYFPSLKLVIWSIPFSVFLVSIMLLINSLRRHTQRMQHNGHSLQDPSTQAHTRALKSLISFLILYALSFLSLIIDATKFISMQNDFYWPWQIAVYLCISIHPFILIFSNLKLRSVFSQLLLLARGFWVA.

Residues 1-7 (MQAALTA) are Extracellular-facing. The chain crosses the membrane as a helical span at residues 8–28 (FFMLLFSLLSLLGIAANGFIV). At 29–40 (LVLGREWLRYGR) the chain is on the cytoplasmic side. Residues 41–61 (LLPLDMILISLGASRFCLQLV) traverse the membrane as a helical segment. Over 62–88 (GTVHNFYYSAQKVEYSGGLGRQFFHLH) the chain is Extracellular. The helical transmembrane segment at 89–109 (WHFLNSATFWFCSWLSVLFCV) threads the bilayer. Residues 110–129 (KIANITHPTFLWLKWRFPAW) are Cytoplasmic-facing. The helical transmembrane segment at 130–150 (VPWLLLGSVLISFIITLLFFW) threads the bilayer. The Extracellular segment spans residues 151-183 (VNYPAYQEFLIRKFSVNMTYKWNTRIETYYFPS). Asparagine 167 is a glycosylation site (N-linked (GlcNAc...) asparagine). The chain crosses the membrane as a helical span at residues 184–204 (LKLVIWSIPFSVFLVSIMLLI). Residues 205–234 (NSLRRHTQRMQHNGHSLQDPSTQAHTRALK) lie on the Cytoplasmic side of the membrane. Residues 235–255 (SLISFLILYALSFLSLIIDAT) traverse the membrane as a helical segment. Topologically, residues 256–264 (KFISMQNDF) are extracellular. Residues 265 to 285 (YWPWQIAVYLCISIHPFILIF) traverse the membrane as a helical segment. At 286 to 307 (SNLKLRSVFSQLLLLARGFWVA) the chain is on the cytoplasmic side.

It belongs to the G-protein coupled receptor T2R family.

It is found in the membrane. Receptor that may play a role in the perception of bitterness and is gustducin-linked. May play a role in sensing the chemical composition of the gastrointestinal content. The activity of this receptor may stimulate alpha gustducin, mediate PLC-beta-2 activation and lead to the gating of TRPM5. The chain is Taste receptor type 2 member 41 (TAS2R41) from Pan paniscus (Pygmy chimpanzee).